The sequence spans 279 residues: Putative biopolymer transport protein ExbB homolog (279 aa).

3 helical membrane-spanning segments follow: residues 19–39, 126–146, and 162–182; these read SGGVITYLIAAIGIYGFITAL, IIEVAPMLGLIGTVIGIWYTF, and IYVALITTILGLAVAIILMPL.

The protein belongs to the ExbB/TolQ family.

It localises to the cell membrane. This chain is Putative biopolymer transport protein ExbB homolog, found in Methanothermobacter thermautotrophicus (strain ATCC 29096 / DSM 1053 / JCM 10044 / NBRC 100330 / Delta H) (Methanobacterium thermoautotrophicum).